Consider the following 548-residue polypeptide: Terpene synthase 1 (548 aa).

Residues D301, D305, D445, and E453 each coordinate Mg(2+). Positions 301 to 305 match the DDXXD motif motif; it reads DDTYD.

It belongs to the terpene synthase family. Tpsa subfamily. It depends on Mg(2+) as a cofactor. The cofactor is Mn(2+).

It catalyses the reaction (2E,6E)-farnesyl diphosphate = (+)-valencene + diphosphate. Its pathway is secondary metabolite biosynthesis; terpenoid biosynthesis. Sesquiterpene synthase involved in the biosynthesis of volatile compounds which contribute to fruit flavor and aroma. Mediates the conversion of (2E,6E)-farnesyl diphosphate (FPP) into (+)-valencene. No activity detected with geranyl diphosphate (GPP). This is Terpene synthase 1 from Citrus sinensis (Sweet orange).